We begin with the raw amino-acid sequence, 1024 residues long: Beta-galactosidase (1024 aa).

The substrate site is built by Asn-103 and Asp-202. Asp-202 contacts Na(+). Mg(2+) is bound by residues Glu-417, His-419, and Glu-462. Substrate-binding positions include Glu-462 and 538-541; that span reads EYAH. Residue Glu-462 is the Proton donor of the active site. Glu-538 acts as the Nucleophile in catalysis. Mg(2+) is bound at residue Asn-598. Residues Phe-602 and Asn-605 each coordinate Na(+). Substrate-binding residues include Asn-605 and Trp-1000.

The protein belongs to the glycosyl hydrolase 2 family. As to quaternary structure, homotetramer. Requires Mg(2+) as cofactor. Na(+) serves as cofactor.

It catalyses the reaction Hydrolysis of terminal non-reducing beta-D-galactose residues in beta-D-galactosides.. This is Beta-galactosidase from Escherichia coli O157:H7.